We begin with the raw amino-acid sequence, 694 residues long: Follicle-stimulating hormone receptor (694 aa).

The signal sequence occupies residues methionine 1–glycine 17. 2 disulfides stabilise this stretch: cysteine 18–cysteine 25 and cysteine 23–cysteine 32. In terms of domain architecture, LRRNT spans cysteine 18 to arginine 46. The Extracellular segment spans residues cysteine 18–arginine 365. LRR repeat units lie at residues leucine 49–leucine 72, glutamate 73–leucine 97, histidine 98–asparagine 118, leucine 119–serine 143, leucine 144–serine 169, phenylalanine 170–glycine 192, threonine 193–glycine 216, alanine 217–asparagine 240, and leucine 241–glutamate 259. N-linked (GlcNAc...) asparagine glycans are attached at residues asparagine 191 and asparagine 199. The N-linked (GlcNAc...) asparagine glycan is linked to asparagine 268. 4 disulfide bridges follow: cysteine 275/cysteine 345, cysteine 276/cysteine 292, cysteine 276/cysteine 355, and cysteine 292/cysteine 337. An N-linked (GlcNAc...) asparagine glycan is attached at asparagine 293. A Sulfotyrosine modification is found at tyrosine 334. A helical transmembrane segment spans residues valine 366–leucine 386. Residues isoleucine 387 to arginine 397 are Cytoplasmic-facing. Residues phenylalanine 398 to valine 420 traverse the membrane as a helical segment. The Extracellular segment spans residues aspartate 421–aspartate 442. Cysteine 441 and cysteine 516 are joined by a disulfide. The helical transmembrane segment at alanine 443–leucine 464 threads the bilayer. The Cytoplasmic segment spans residues glutamate 465–histidine 484. The chain crosses the membrane as a helical span at residues alanine 485–isoleucine 507. Residues serine 508–glutamine 527 lie on the Extracellular side of the membrane. The chain crosses the membrane as a helical span at residues leucine 528 to isoleucine 549. Residues histidine 550–arginine 572 lie on the Cytoplasmic side of the membrane. Residues methionine 573–leucine 596 form a helical membrane-spanning segment. Topologically, residues lysine 597–lysine 607 are extracellular. A helical membrane pass occupies residues isoleucine 608 to threonine 629. The Cytoplasmic segment spans residues lysine 630–asparagine 694.

This sequence belongs to the G-protein coupled receptor 1 family. FSH/LSH/TSH subfamily. In terms of assembly, homotrimer. Functions as a homotrimer binding the FSH hormone heterodimer composed of CGA and FSHB. Interacts with ARRB2. Interacts with APPL2; interaction is independent of follicle stimulating hormone stimulation. N-glycosylated; indirectly required for FSH-binding, possibly via a conformational change that allows high affinity binding of hormone. In terms of processing, sulfated.

It localises to the cell membrane. Functionally, g protein-coupled receptor for follitropin, the follicle-stimulating hormone. Through cAMP production activates the downstream PI3K-AKT and ERK1/ERK2 signaling pathways. This chain is Follicle-stimulating hormone receptor (FSHR), found in Equus caballus (Horse).